Consider the following 158-residue polypeptide: Ecotin (158 aa).

The first 21 residues, 1–21, serve as a signal peptide directing secretion; it reads MRLLPLASVTLLSVLCAQAFA. C67 and C104 are joined by a disulfide.

It belongs to the protease inhibitor I11 (ecotin) family. Homodimer.

The protein resides in the periplasm. Functionally, general inhibitor of family S1 serine proteases. The sequence is that of Ecotin from Pseudomonas fluorescens (strain ATCC BAA-477 / NRRL B-23932 / Pf-5).